The primary structure comprises 591 residues: Serine/threonine-protein kinase Nek2 (591 aa).

One can recognise a Protein kinase domain in the interval 4–258 (YEVLEQIGKG…AAQLLKHPQL (255 aa)). Residues 10-18 (IGKGAFGSA) and Lys-33 contribute to the ATP site. The active-site Proton acceptor is Asp-129. 3 disordered regions span residues 309–331 (LGNE…SSTR), 382–408 (ARNQ…TTPN), and 500–534 (RTDG…DTSS). Polar residues-rich tracts occupy residues 391–408 (TSYN…TTPN) and 504–534 (DNGS…DTSS).

This sequence belongs to the protein kinase superfamily. NEK Ser/Thr protein kinase family. NIMA subfamily. In terms of tissue distribution, expressed in anthers, pistils and leaves.

The enzyme catalyses L-seryl-[protein] + ATP = O-phospho-L-seryl-[protein] + ADP + H(+). It catalyses the reaction L-threonyl-[protein] + ATP = O-phospho-L-threonyl-[protein] + ADP + H(+). Its function is as follows. May be involved in plant development processes. The chain is Serine/threonine-protein kinase Nek2 from Oryza sativa subsp. japonica (Rice).